We begin with the raw amino-acid sequence, 537 residues long: 2-isopropylmalate synthase (537 aa).

The Pyruvate carboxyltransferase domain occupies 8 to 273; that stretch reads IIIFDTTLRD…FLGRPVDSME (266 aa). Positions 17, 208, 210, and 244 each coordinate Mn(2+). The regulatory domain stretch occupies residues 408–537; that stretch reads RLELVQVSCG…PSEPVLTSKN (130 aa).

The protein belongs to the alpha-IPM synthase/homocitrate synthase family. LeuA type 1 subfamily. As to quaternary structure, homodimer. It depends on Mn(2+) as a cofactor.

It is found in the cytoplasm. The catalysed reaction is 3-methyl-2-oxobutanoate + acetyl-CoA + H2O = (2S)-2-isopropylmalate + CoA + H(+). It functions in the pathway amino-acid biosynthesis; L-leucine biosynthesis; L-leucine from 3-methyl-2-oxobutanoate: step 1/4. In terms of biological role, catalyzes the condensation of the acetyl group of acetyl-CoA with 3-methyl-2-oxobutanoate (2-ketoisovalerate) to form 3-carboxy-3-hydroxy-4-methylpentanoate (2-isopropylmalate). The protein is 2-isopropylmalate synthase of Crocosphaera subtropica (strain ATCC 51142 / BH68) (Cyanothece sp. (strain ATCC 51142)).